Reading from the N-terminus, the 30-residue chain is MQTFSLLVAYKIFTDGTETKRVHASKAKHA.

This is an uncharacterized protein from Treponema pallidum (strain Nichols).